The sequence spans 523 residues: FAD-dependent monooxygenase drtC (523 aa).

In terms of domain architecture, FAD-binding PCMH-type spans 77-252 (TSLNSACIVL…TNFEVRAFPQ (176 aa)).

It belongs to the oxygen-dependent FAD-linked oxidoreductase family. The cofactor is FAD.

It participates in secondary metabolite biosynthesis; terpenoid biosynthesis. Its function is as follows. FAD-dependent monooxygenase; part of the gene cluster that mediates the biosynthesis of various drimane-type sesquiterpene esters, compounds that exhibit diverse biological activities and are widely present in eukaryotes. The pathway begins with the synthesis of the backbone drimenol by the terpene cyclase drtB using farnesyl pyrophosphate (FPP) as substrate. The cytochrome P450 monooxygenase drtD is then responsible for the hydroxylations at C-6, C-9 and C-12, as well as the oxidation of hydroxyl groups at C-6 and C-11 to a ketone and an aldehyde, respectively. Then, the biosynthesis can go in two directions, either the hydroxylated drimenol is further hydroxylated at C-2 and C-3 by an enzyme(s) not associated with the drt cluster, or the FAD-binding oxidoreductase drtC further oxidizes C-11 or C-12 to form the butyrolactone ring. DrtB, drtD and drtC are solely responsible for the formation of the different drimane structures observed during drimane sesquiterpenes biosynthesis. The polyketide synthase drtA synthesizes different lengths (C6 and C8) of PKS chains, which are then oxidized to varying degrees by the short-chain dehydrogenase drtF. Finally, these PKS chains are transferred onto drimane sesquiterpenes by the acyltransferase drtE, forming the sesquiterpene esters. In addition to the different fatty acyl-CoA chains produced by drtA, drtE is also able to use cinnamoyl-CoA as a substrate. In Aspergillus calidoustus, this protein is FAD-dependent monooxygenase drtC.